A 246-amino-acid polypeptide reads, in one-letter code: Neurotrophic factor BDNF precursor form (246 aa).

The first 18 residues, 1 to 18, serve as a signal peptide directing secretion; sequence MTILFLTMVISYFSCMKA. Positions 19–127 are excised as a propeptide; the sequence is APMKEASVRG…AANMSMRVRR (109 aa). The N-linked (GlcNAc...) asparagine glycan is linked to Asn-120. 3 disulfide bridges follow: Cys-140–Cys-207, Cys-185–Cys-236, and Cys-195–Cys-238.

This sequence belongs to the NGF-beta family.

The protein localises to the secreted. Its function is as follows. Important signaling molecule that activates signaling cascades downstream of NTRK2. During development, promotes the survival and differentiation of selected neuronal populations of the peripheral and central nervous systems. Participates in axonal growth, pathfinding and in the modulation of dendritic growth and morphology. Major regulator of synaptic transmission and plasticity at adult synapses in many regions of the CNS. The versatility of BDNF is emphasized by its contribution to a range of adaptive neuronal responses including long-term potentiation (LTP), long-term depression (LTD), certain forms of short-term synaptic plasticity, as well as homeostatic regulation of intrinsic neuronal excitability. This chain is Neurotrophic factor BDNF precursor form (BDNF), found in Gallus gallus (Chicken).